Reading from the N-terminus, the 381-residue chain is E3 ubiquitin-protein ligase KCMF1 (381 aa).

At Ser2 the chain carries N-acetylserine. Ser2 carries the post-translational modification Phosphoserine. The ZZ-type zinc finger occupies 4-60 (HEGVSCDACLKGNFRGRRYKCLICYDYDLCASCYESGATTTRHTTDHPMQCILTRVD). Zn(2+)-binding residues include Cys9, Cys12, Cys24, Cys27, Cys33, Cys36, His46, and His50. The segment at 78–101 (FTCPYCGKMGYTETSLQEHVTSEH) adopts a C2H2-type zinc-finger fold. The interval 154-194 (MFHPGRGLGGPRARRSNMHFTSSSTGGLSSSQSSYSPSSRE) is disordered. Phosphoserine occurs at positions 169, 189, and 212. Residues 175 to 192 (SSSTGGLSSSQSSYSPSS) are compositionally biased toward low complexity. The stretch at 224–259 (ASQLQQLQMQLQLERQHAQAARQQLETARNASRRTN) forms a coiled coil. Phosphoserine occurs at positions 335 and 336.

The protein belongs to the KCMF1 family. In terms of assembly, component of the SIFI complex, composed of KCMF1, UBR4 and calmodulin (CALM1, CALM2 or CALM3). As to expression, testis, liver, kidney, heart and skeletal muscle.

It is found in the cytoplasm. The protein resides in the late endosome. It localises to the lysosome. It carries out the reaction S-ubiquitinyl-[E2 ubiquitin-conjugating enzyme]-L-cysteine + [acceptor protein]-L-lysine = [E2 ubiquitin-conjugating enzyme]-L-cysteine + N(6)-ubiquitinyl-[acceptor protein]-L-lysine.. The protein operates within protein modification; protein ubiquitination. In terms of biological role, E3 ubiquitin-protein ligase which accepts ubiquitin from an E2 ubiquitin-conjugating enzyme and then transfers it to targeted substrates, promoting their degradation by the proteasome. Together with UBR4, component of the N-end rule pathway: ubiquitinates proteins bearing specific N-terminal residues that are destabilizing according to the N-end rule, leading to their degradation. Does not ubiquitinate proteins that are acetylated at the N-terminus. Together with UBR4, part of a protein quality control pathway that catalyzes ubiquitination and degradation of proteins that have been oxidized in response to reactive oxygen species (ROS): recognizes proteins with an Arg-CysO3(H) degron at the N-terminus, and mediates assembly of heterotypic 'Lys-63'-/'Lys-27'-linked branched ubiquitin chains on oxidized proteins, leading to their degradation by autophagy. Catalytic component of the SIFI complex, a multiprotein complex required to inhibit the mitochondrial stress response after a specific stress event has been resolved: ubiquitinates and degrades (1) components of the HRI-mediated signaling of the integrated stress response, such as DELE1 and EIF2AK1/HRI, as well as (2) unimported mitochondrial precursors. Within the SIFI complex, UBR4 initiates ubiquitin chain that are further elongated or branched by KCMF1. This is E3 ubiquitin-protein ligase KCMF1 from Mus musculus (Mouse).